Consider the following 82-residue polypeptide: uncharacterized protein (82 aa).

The next 2 membrane-spanning stretches (helical) occupy residues 8-28 (LLSAAGILLLALLSCLLLPAP) and 50-70 (LYTVLFCLWFLALGAIEYLVL).

It is found in the cell membrane. This is an uncharacterized protein from Klebsiella pneumoniae.